Consider the following 328-residue polypeptide: GMP reductase (328 aa).

Residue C177 is the Thioimidate intermediate of the active site. Residue 206-229 (IVADGGIRYNGDIAKSIRFGASMV) coordinates NADP(+).

The protein belongs to the IMPDH/GMPR family. GuaC type 2 subfamily.

It catalyses the reaction IMP + NH4(+) + NADP(+) = GMP + NADPH + 2 H(+). Functionally, catalyzes the irreversible NADPH-dependent deamination of GMP to IMP. It functions in the conversion of nucleobase, nucleoside and nucleotide derivatives of G to A nucleotides, and in maintaining the intracellular balance of A and G nucleotides. This chain is GMP reductase, found in Levilactobacillus brevis (strain ATCC 367 / BCRC 12310 / CIP 105137 / JCM 1170 / LMG 11437 / NCIMB 947 / NCTC 947) (Lactobacillus brevis).